Reading from the N-terminus, the 242-residue chain is Small ribosomal subunit protein uS2 (242 aa).

It belongs to the universal ribosomal protein uS2 family.

This Colwellia psychrerythraea (strain 34H / ATCC BAA-681) (Vibrio psychroerythus) protein is Small ribosomal subunit protein uS2.